We begin with the raw amino-acid sequence, 369 residues long: MKYKRIVFKVGTSSLTNEDGSLSRSKVKDITQQLAMLHEAGHELILVSSGAIAAGFGALGFKKRPTKIADKQASAAVGQGLLLEEYTTNLLLRQIVSAQILLTQDDFVDKRRYKNAHQALSVLLNRGAIPIINENDSVVIDEVKVGDNDTLSAQVAAMVQADLLVLLTDVDGLYTGNPNSDPRAKRLERIETINREIIDMAGGAGSSNGTGGMLTKIKAATIATESGVPVYICSSLKSDSMIEAAEETEDGSYFVAQEKGLRTQKQWLAFYAQSQGSIWVDKGAAEALSQHGKSLLLSGIVEAEGAFSYGDIVTVFDKESGKSLGKGRVQFGASALEDILRSQKAKGVLIYRDDWISITPEIQLLFTEF.

Lys9 lines the ATP pocket. Substrate is bound by residues Ser49, Asp136, and Asn148. ATP contacts are provided by residues Thr168 to Asp169 and Thr210 to Lys216. One can recognise a PUA domain in the interval Gln275 to Trp355.

The protein belongs to the glutamate 5-kinase family.

The protein localises to the cytoplasm. It carries out the reaction L-glutamate + ATP = L-glutamyl 5-phosphate + ADP. It participates in amino-acid biosynthesis; L-proline biosynthesis; L-glutamate 5-semialdehyde from L-glutamate: step 1/2. Catalyzes the transfer of a phosphate group to glutamate to form L-glutamate 5-phosphate. The polypeptide is Glutamate 5-kinase (Streptococcus pneumoniae (strain Hungary19A-6)).